The primary structure comprises 189 residues: Isopentenyl-diphosphate Delta-isomerase (189 aa).

Residues His-27 and His-34 each contribute to the Mn(2+) site. Positions 32-171 (PLHFAFSTYI…PFVFSPWLVD (140 aa)) constitute a Nudix hydrolase domain. Residue Cys-69 is part of the active site. Cys-69 lines the Mg(2+) pocket. His-71 is a binding site for Mn(2+). Glu-89 is a Mg(2+) binding site. Mn(2+) contacts are provided by Glu-119 and Glu-121. Glu-121 is a catalytic residue.

Belongs to the IPP isomerase type 1 family. Mg(2+) serves as cofactor. It depends on Mn(2+) as a cofactor.

It localises to the cytoplasm. It catalyses the reaction isopentenyl diphosphate = dimethylallyl diphosphate. The protein operates within isoprenoid biosynthesis; dimethylallyl diphosphate biosynthesis; dimethylallyl diphosphate from isopentenyl diphosphate: step 1/1. Catalyzes the 1,3-allylic rearrangement of the homoallylic substrate isopentenyl (IPP) to its highly electrophilic allylic isomer, dimethylallyl diphosphate (DMAPP). The chain is Isopentenyl-diphosphate Delta-isomerase from Corynebacterium glutamicum (strain ATCC 13032 / DSM 20300 / JCM 1318 / BCRC 11384 / CCUG 27702 / LMG 3730 / NBRC 12168 / NCIMB 10025 / NRRL B-2784 / 534).